Here is a 419-residue protein sequence, read N- to C-terminus: Probable pectate lyase C (419 aa).

A signal peptide spans 1-19; the sequence is MRLTPSLISCLSLLHFTSA. Asparagine 48, asparagine 164, and asparagine 201 each carry an N-linked (GlcNAc...) asparagine glycan. Arginine 204 is a catalytic residue. The 36-residue stretch at 261 to 296 folds into the EF-hand domain; it reads NENFHAYVETNYYDSDKDGTLNGSELGVDSTNYGGM. Ca(2+) contacts are provided by aspartate 274, aspartate 276, aspartate 278, and threonine 280. A glycan (N-linked (GlcNAc...) asparagine) is linked at asparagine 282. A Ca(2+)-binding site is contributed by glutamate 285. The segment at 350–395 is disordered; that stretch reads ALISDEADMGGAGDLDQGTTPTDTDGDGIPDDAEAELGTDPNTADS. Residues 363–372 show a composition bias toward low complexity; the sequence is DLDQGTTPTD. The segment covering 373–386 has biased composition (acidic residues); the sequence is TDGDGIPDDAEAEL.

Belongs to the polysaccharide lyase 1 family. Ca(2+) serves as cofactor.

It is found in the secreted. The catalysed reaction is Eliminative cleavage of (1-&gt;4)-alpha-D-galacturonan to give oligosaccharides with 4-deoxy-alpha-D-galact-4-enuronosyl groups at their non-reducing ends.. Functionally, pectinolytic enzyme consist of four classes of enzymes: pectin lyase, polygalacturonase, pectin methylesterase and rhamnogalacturonase. Among pectinolytic enzymes, pectin lyase is the most important in depolymerization of pectin, since it cleaves internal glycosidic bonds of highly methylated pectins. Favors pectate, the anion, over pectin, the methyl ester. This Aspergillus flavus (strain ATCC 200026 / FGSC A1120 / IAM 13836 / NRRL 3357 / JCM 12722 / SRRC 167) protein is Probable pectate lyase C (plyC).